A 217-amino-acid chain; its full sequence is uncharacterized protein (217 aa).

2 disordered regions span residues 1-85 (MGVK…RGNT) and 167-189 (KLRSPPHKDQHNSATNKDQEPDE). Residues 38–48 (AKSDKDKRKGS) are compositionally biased toward basic and acidic residues. Over residues 60 to 78 (NALPTKNLTTPPALNPLTT) the composition is skewed to low complexity. Over residues 172-189 (PHKDQHNSATNKDQEPDE) the composition is skewed to basic and acidic residues.

This is an uncharacterized protein from Saccharomyces cerevisiae (strain ATCC 204508 / S288c) (Baker's yeast).